Consider the following 305-residue polypeptide: Oligopeptide transport ATP-binding protein OppF (305 aa).

In terms of domain architecture, ABC transporter spans 6–251 (LEIKHLKQHF…PLHPYTKSLL (246 aa)). 42–49 (GESGCGKS) serves as a coordination point for ATP.

The protein belongs to the ABC transporter superfamily. In terms of assembly, the complex is composed of two ATP-binding proteins (OppD and OppF), two transmembrane proteins (OppB and OppC) and a solute-binding protein (OppA).

Its subcellular location is the cell membrane. The enzyme catalyses a [peptide](out) + ATP + H2O = a [peptide](in) + ADP + phosphate + H(+). In terms of biological role, part of the ABC transporter complex OppABCDF involved in the uptake of oligopeptides. Probably responsible for energy coupling to the transport system. Required for genetic competence but not for peptide transport or for sporulation. This chain is Oligopeptide transport ATP-binding protein OppF, found in Bacillus subtilis (strain 168).